Reading from the N-terminus, the 271-residue chain is Phycocyanobilin lyase subunit alpha (271 aa).

It belongs to the CpcE/RpcE/PecE family. As to quaternary structure, cpcE and CpcF associate to form a lyase.

Required for the chromophorylation of the cpcA1 gene product. The sequence is that of Phycocyanobilin lyase subunit alpha (cpcE1) from Pseudanabaena tenuis (strain PCC 7409).